Consider the following 330-residue polypeptide: D-lactate dehydrogenase (330 aa).

Residues 155 to 156 (RI), D175, 206 to 207 (MP), N212, 233 to 235 (MAR), and D259 contribute to the NAD(+) site. R235 is a catalytic residue. The active site involves E264. H296 functions as the Proton donor in the catalytic mechanism.

It belongs to the D-isomer specific 2-hydroxyacid dehydrogenase family.

It catalyses the reaction (R)-lactate + NAD(+) = pyruvate + NADH + H(+). This chain is D-lactate dehydrogenase (ldhD), found in Streptococcus agalactiae serotype V (strain ATCC BAA-611 / 2603 V/R).